A 137-amino-acid chain; its full sequence is Peptide methionine sulfoxide reductase MsrB (137 aa).

The region spanning 7–129 (AEELKKNLSE…NSASLRFTDG (123 aa)) is the MsrB domain. C46, C49, C95, and C98 together coordinate Zn(2+). Catalysis depends on C118, which acts as the Nucleophile.

This sequence belongs to the MsrB Met sulfoxide reductase family. Requires Zn(2+) as cofactor.

The catalysed reaction is L-methionyl-[protein] + [thioredoxin]-disulfide + H2O = L-methionyl-(R)-S-oxide-[protein] + [thioredoxin]-dithiol. The protein is Peptide methionine sulfoxide reductase MsrB of Escherichia coli O45:K1 (strain S88 / ExPEC).